A 521-amino-acid chain; its full sequence is NAD(P)H-quinone oxidoreductase subunit 2 (521 aa).

14 consecutive transmembrane segments (helical) span residues 16–36 (ILPE…DLIG), 40–60 (VALA…GLLV), 80–100 (LSII…LMSV), 110–130 (LAEF…LSAA), 133–153 (LVMV…MTGY), 168–188 (LLIG…LYGL), 212–232 (LGLA…ISAV), 246–266 (PTPV…AVAI), 280–300 (WHVI…VVAL), 308–328 (MLAY…VAGS), 336–356 (VFYM…IILF), 380–400 (LGLS…GFFG), 402–422 (IYIF…LGLV), and 468–488 (VGIV…NPLF).

Belongs to the complex I subunit 2 family. NDH-1 can be composed of about 15 different subunits; different subcomplexes with different compositions have been identified which probably have different functions.

It localises to the cellular thylakoid membrane. The enzyme catalyses a plastoquinone + NADH + (n+1) H(+)(in) = a plastoquinol + NAD(+) + n H(+)(out). The catalysed reaction is a plastoquinone + NADPH + (n+1) H(+)(in) = a plastoquinol + NADP(+) + n H(+)(out). In terms of biological role, NDH-1 shuttles electrons from an unknown electron donor, via FMN and iron-sulfur (Fe-S) centers, to quinones in the respiratory and/or the photosynthetic chain. The immediate electron acceptor for the enzyme in this species is believed to be plastoquinone. Couples the redox reaction to proton translocation, and thus conserves the redox energy in a proton gradient. Cyanobacterial NDH-1 also plays a role in inorganic carbon-concentration. The chain is NAD(P)H-quinone oxidoreductase subunit 2 from Synechocystis sp. (strain ATCC 27184 / PCC 6803 / Kazusa).